A 1370-amino-acid polypeptide reads, in one-letter code: Major capsid protein (1370 aa).

Belongs to the herpesviridae major capsid protein family. Homomultimer. Makes the hexons and eleven out of twelve pentons. Interacts with triplex proteins 1/TRX1 and 2/TRX2; adjacent capsomers are linked together in groups of three by triplexes, heterotrimeric complexes composed of one molecule of TRX1 and two molecules of TRX2. Interacts with scaffold protein; this interaction allows efficient MCP transport to the host nucleus. Interacts with capsid vertex component 2/CVC2. Interacts with the small capsomere-interacting protein/SCP.

The protein resides in the virion. It is found in the host nucleus. Functionally, self-assembles to form an icosahedral capsid with a T=16 symmetry, about 200 nm in diameter, and consisting of 150 hexons and 12 pentons (total of 162 capsomers). Hexons form the edges and faces of the capsid and are each composed of six MCP molecules. In contrast, one penton is found at each of the 12 vertices. Eleven of the pentons are MCP pentamers, while the last vertex is occupied by the portal complex. The capsid is surrounded by a layer of proteinaceous material designated the tegument which, in turn, is enclosed in an envelope of host cell-derived lipids containing virus-encoded glycoproteins. In Human cytomegalovirus (strain AD169) (HHV-5), this protein is Major capsid protein.